Consider the following 444-residue polypeptide: Transmembrane protein with metallophosphoesterase domain (444 aa).

5 helical membrane passes run 7–27, 43–63, 87–107, 114–134, and 162–182; these read LSLGAKAALAAGTVFVSMIVS, LFRLQLALFVNSLMLLGSIYI, MVVAAFLALAHSSFFTMIFLV, FSLVAYTCLGAYVIMLCFLCV, and LALRPALAVMVTTVLSVVGLL. Positions 214, 216, 246, 277, 382, and 384 each coordinate a divalent metal cation.

Belongs to the metallophosphoesterase superfamily. LOC643853 family. It depends on a divalent metal cation as a cofactor.

Its subcellular location is the membrane. The chain is Transmembrane protein with metallophosphoesterase domain (TMPPE) from Bos taurus (Bovine).